We begin with the raw amino-acid sequence, 348 residues long: Phenylalanine--tRNA ligase alpha subunit (348 aa).

Position 262 (E262) interacts with Mg(2+).

This sequence belongs to the class-II aminoacyl-tRNA synthetase family. Phe-tRNA synthetase alpha subunit type 1 subfamily. In terms of assembly, tetramer of two alpha and two beta subunits. It depends on Mg(2+) as a cofactor.

Its subcellular location is the cytoplasm. The enzyme catalyses tRNA(Phe) + L-phenylalanine + ATP = L-phenylalanyl-tRNA(Phe) + AMP + diphosphate + H(+). The sequence is that of Phenylalanine--tRNA ligase alpha subunit from Streptococcus pneumoniae (strain JJA).